A 426-amino-acid polypeptide reads, in one-letter code: 5-hydroxybenzimidazole synthase BzaB (426 aa).

Substrate contacts are provided by residues methionine 95, tyrosine 124, histidine 163, 185 to 187, 226 to 229, and glutamate 265; these read SRG and DAIR. Histidine 269 is a Zn(2+) binding site. Position 292 (phenylalanine 292) interacts with substrate. Histidine 333 is a binding site for Zn(2+). [4Fe-4S] cluster-binding residues include cysteine 407, cysteine 410, and cysteine 414.

This sequence belongs to the ThiC family. 5-hydroxybenzimidazole synthase subfamily. [4Fe-4S] cluster is required as a cofactor.

It carries out the reaction 5-amino-1-(5-phospho-beta-D-ribosyl)imidazole + AH2 + S-adenosyl-L-methionine = 5-hydroxybenzimidazole + 5'-deoxyadenosine + formate + L-methionine + A + NH4(+) + phosphate + 2 H(+). In terms of biological role, together with BzaA, probably catalyzes the conversion of aminoimidazole ribotide (AIR) to 5-hydroxybenzimidazole (5-HBI) in a radical S-adenosyl-L-methionine (SAM)-dependent reaction. Is thus involved in the anaerobic biosynthesis of the benzimidazole lower axial ligand of the cobamide produced by M.thermoacetica. Requires BzaA for catalytic activity, as BzaB alone displays no activity. This chain is 5-hydroxybenzimidazole synthase BzaB, found in Moorella thermoacetica (strain ATCC 39073 / JCM 9320).